Consider the following 793-residue polypeptide: Protocadherin beta-7 (793 aa).

An N-terminal signal peptide occupies residues 1-26; the sequence is MEARVERAVQKRQVLFLCVFLGMSWA. Residues 27 to 688 lie on the Extracellular side of the membrane; the sequence is GAEPLRYFVA…DQANLLTVYL (662 aa). Cadherin domains follow at residues 35–133, 138–242, 247–347, 352–451, and 456–561; these read VAEE…APVF, ISLK…APDF, YKVQ…RPEL, LTSP…APAF, and YTLF…SPFV. An N-linked (GlcNAc...) asparagine glycan is attached at N169. N418 and N436 each carry an N-linked (GlcNAc...) asparagine glycan. The N-linked (GlcNAc...) asparagine glycan is linked to N567. The region spanning 568 to 671 is the Cadherin 6 domain; the sequence is SSAPCTEPLP…LVDGFSQPYL (104 aa). A helical transmembrane segment spans residues 689-709; sequence VVALASVSSLFLLSVLLFVAV. At 710 to 793 the chain is on the cytoplasmic side; sequence RLCRRSRAAP…NRPFQNNLGF (84 aa).

The protein resides in the cell membrane. Its function is as follows. Potential calcium-dependent cell-adhesion protein. May be involved in the establishment and maintenance of specific neuronal connections in the brain. This chain is Protocadherin beta-7 (PCDHB7), found in Pan troglodytes (Chimpanzee).